Reading from the N-terminus, the 86-residue chain is ATP synthase subunit c (86 aa).

The next 2 helical transmembrane spans lie at 4-24 and 57-77; these read AIVA…GIGA and VAIA…LLFV.

The protein belongs to the ATPase C chain family. F-type ATPases have 2 components, F(1) - the catalytic core - and F(0) - the membrane proton channel. F(1) has five subunits: alpha(3), beta(3), gamma(1), delta(1), epsilon(1). F(0) has three main subunits: a(1), b(2) and c(10-14). The alpha and beta chains form an alternating ring which encloses part of the gamma chain. F(1) is attached to F(0) by a central stalk formed by the gamma and epsilon chains, while a peripheral stalk is formed by the delta and b chains.

The protein resides in the cell membrane. In terms of biological role, f(1)F(0) ATP synthase produces ATP from ADP in the presence of a proton or sodium gradient. F-type ATPases consist of two structural domains, F(1) containing the extramembraneous catalytic core and F(0) containing the membrane proton channel, linked together by a central stalk and a peripheral stalk. During catalysis, ATP synthesis in the catalytic domain of F(1) is coupled via a rotary mechanism of the central stalk subunits to proton translocation. Key component of the F(0) channel; it plays a direct role in translocation across the membrane. A homomeric c-ring of between 10-14 subunits forms the central stalk rotor element with the F(1) delta and epsilon subunits. This Clostridioides difficile (strain 630) (Peptoclostridium difficile) protein is ATP synthase subunit c.